The chain runs to 242 residues: MSKRRIAPLTFLRRLLLRILAALAVFWGGGIALFSVVPVPFSAVMAERQISAWLGGEFGYVAHSDWVSMADISPWMGLAVIAAEDQKFPEHWGFDVPAIEKALAHNERNESRIRGASTLSQQTAKNLFLWDGRSWLRKGLEAGLTLGIETVWSKKRILTVYLNIAEFGDGIFGVEAAAQRYFHKPASRLSVSEAALLAAVLPNPLRYKANAPSGYVRSRQAWIMRQMRQLGGESFMTRNQLN.

The helical transmembrane segment at 19-39 (ILAALAVFWGGGIALFSVVPV) threads the bilayer.

Belongs to the glycosyltransferase 51 family.

The protein localises to the cell inner membrane. The catalysed reaction is [GlcNAc-(1-&gt;4)-Mur2Ac(oyl-L-Ala-gamma-D-Glu-L-Lys-D-Ala-D-Ala)](n)-di-trans,octa-cis-undecaprenyl diphosphate + beta-D-GlcNAc-(1-&gt;4)-Mur2Ac(oyl-L-Ala-gamma-D-Glu-L-Lys-D-Ala-D-Ala)-di-trans,octa-cis-undecaprenyl diphosphate = [GlcNAc-(1-&gt;4)-Mur2Ac(oyl-L-Ala-gamma-D-Glu-L-Lys-D-Ala-D-Ala)](n+1)-di-trans,octa-cis-undecaprenyl diphosphate + di-trans,octa-cis-undecaprenyl diphosphate + H(+). Its pathway is cell wall biogenesis; peptidoglycan biosynthesis. Its function is as follows. Peptidoglycan polymerase that catalyzes glycan chain elongation from lipid-linked precursors. The polypeptide is Biosynthetic peptidoglycan transglycosylase (Salmonella choleraesuis (strain SC-B67)).